The sequence spans 143 residues: Large ribosomal subunit protein uL11 (143 aa).

It belongs to the universal ribosomal protein uL11 family. Part of the ribosomal stalk of the 50S ribosomal subunit. Interacts with L10 and the large rRNA to form the base of the stalk. L10 forms an elongated spine to which L12 dimers bind in a sequential fashion forming a multimeric L10(L12)X complex. In terms of processing, one or more lysine residues are methylated.

In terms of biological role, forms part of the ribosomal stalk which helps the ribosome interact with GTP-bound translation factors. This chain is Large ribosomal subunit protein uL11, found in Phenylobacterium zucineum (strain HLK1).